The chain runs to 333 residues: N-acetyl-gamma-glutamyl-phosphate reductase (333 aa).

Residue Cys-145 is part of the active site.

It belongs to the NAGSA dehydrogenase family. Type 1 subfamily.

It localises to the cytoplasm. The enzyme catalyses N-acetyl-L-glutamate 5-semialdehyde + phosphate + NADP(+) = N-acetyl-L-glutamyl 5-phosphate + NADPH + H(+). Its pathway is amino-acid biosynthesis; L-arginine biosynthesis; N(2)-acetyl-L-ornithine from L-glutamate: step 3/4. Its function is as follows. Catalyzes the NADPH-dependent reduction of N-acetyl-5-glutamyl phosphate to yield N-acetyl-L-glutamate 5-semialdehyde. In Salinispora arenicola (strain CNS-205), this protein is N-acetyl-gamma-glutamyl-phosphate reductase.